A 278-amino-acid chain; its full sequence is Acetyl-coenzyme A carboxylase carboxyl transferase subunit beta (278 aa).

The CoA carboxyltransferase N-terminal domain occupies 23-278; the sequence is LWSKCDSCGA…QLIKLLGHMK (256 aa). 4 residues coordinate Zn(2+): Cys27, Cys30, Cys46, and Cys49. A C4-type zinc finger spans residues 27-49; it reads CDSCGAALHKKQLEDHLYTCPHC.

This sequence belongs to the AccD/PCCB family. As to quaternary structure, acetyl-CoA carboxylase is a heterohexamer composed of biotin carboxyl carrier protein (AccB), biotin carboxylase (AccC) and two subunits each of ACCase subunit alpha (AccA) and ACCase subunit beta (AccD). Zn(2+) is required as a cofactor.

It is found in the cytoplasm. The catalysed reaction is N(6)-carboxybiotinyl-L-lysyl-[protein] + acetyl-CoA = N(6)-biotinyl-L-lysyl-[protein] + malonyl-CoA. Its pathway is lipid metabolism; malonyl-CoA biosynthesis; malonyl-CoA from acetyl-CoA: step 1/1. Its function is as follows. Component of the acetyl coenzyme A carboxylase (ACC) complex. Biotin carboxylase (BC) catalyzes the carboxylation of biotin on its carrier protein (BCCP) and then the CO(2) group is transferred by the transcarboxylase to acetyl-CoA to form malonyl-CoA. The polypeptide is Acetyl-coenzyme A carboxylase carboxyl transferase subunit beta (Chlorobaculum tepidum (strain ATCC 49652 / DSM 12025 / NBRC 103806 / TLS) (Chlorobium tepidum)).